A 131-amino-acid polypeptide reads, in one-letter code: Profilin (131 aa).

The protein belongs to the profilin family. As to quaternary structure, occurs in many kinds of cells as a complex with monomeric actin in a 1:1 ratio.

It is found in the cytoplasm. Its subcellular location is the cytoskeleton. In terms of biological role, binds to actin and affects the structure of the cytoskeleton. At high concentrations, profilin prevents the polymerization of actin, whereas it enhances it at low concentrations. By binding to PIP2, it inhibits the formation of IP3 and DG. This chain is Profilin, found in Fragaria ananassa (Strawberry).